A 553-amino-acid polypeptide reads, in one-letter code: Cytokine-like nuclear factor N-PAC (553 aa).

The region spanning 8 to 66 (LGDLVWGKLGRYPPWPGKIVNPPKDLKKPRGKKCFFVKFFGTEDHAWIKVEQLKPYHAH) is the PWWP domain. Composition is skewed to basic and acidic residues over residues 92 to 145 (RAKG…EGKK) and 162 to 182 (RAQE…KDLT). The tract at residues 92-188 (RAKGKDQTSS…KDLTIPESST (97 aa)) is disordered. Serine 130 is modified (phosphoserine). A Glycyl lysine isopeptide (Lys-Gly) (interchain with G-Cter in SUMO2) cross-link involves residue lysine 135. Serine 167 is subject to Phosphoserine. Residues 168–180 (PRKRGRPPKDEKD) constitute a DNA-binding region (a.T hook). Glycyl lysine isopeptide (Lys-Gly) (interchain with G-Cter in SUMO2) cross-links involve residues lysine 176, lysine 179, lysine 201, and lysine 211. The segment at 214–217 (DPHF) is interaction with histone H3. An interaction with KDM1B region spans residues 216-225 (HFHHFLLSQT). Glycyl lysine isopeptide (Lys-Gly) (interchain with G-Cter in SUMO2) cross-links involve residues lysine 227, lysine 237, lysine 240, and lysine 269. The tract at residues 261–553 (GSITPTDKKI…MSAVYRAYIH (293 aa)) is dehydrogenase domain. 271–285 (GFLGLGLMGSGIVSN) contributes to the NAD(+) binding site. Lysine 302 participates in a covalent cross-link: Glycyl lysine isopeptide (Lys-Gly) (interchain with G-Cter in SUMO2). Residues threonine 362 and lysine 505 each coordinate NAD(+). At serine 540 the chain carries Phosphoserine.

Belongs to the HIBADH-related family. NP60 subfamily. In terms of assembly, homotetramere. Interacts with MAPK14. Interacts with KDM1B at nucleosomes; this interaction stimulates H3K4me1 and H3K4me2 demethylation. Binds to mononucleosomes. Interacts with GATA4; the interaction is required for a synergistic activation of GATA4 target genes transcription.

Its subcellular location is the nucleus. The protein resides in the chromosome. Functionally, cytokine-like nuclear factor with chromatin gene reader activity involved in chromatin modification and regulation of gene expression. Acts as a nucleosome-destabilizing factor that is recruited to genes during transcriptional activation. Recognizes and binds histone H3 without a preference for specific epigenetic markers and also binds DNA. Interacts with KDM1B and promotes its histone demethylase activity by facilitating the capture of H3 tails, they form a multifunctional enzyme complex that modifies transcribed chromatin and facilitates Pol II transcription through nucleosomes. Stimulates the acetylation of 'Lys-56' of nucleosomal histone H3 (H3K56ac) by EP300. With GATA4, co-binds a defined set of heart development genes and coregulates their expression during cardiomyocyte differentiation. Regulates p38 MAP kinase activity by mediating stress activation of MAPK14/p38alpha and specifically regulating MAPK14 signaling. Indirectly promotes phosphorylation of MAPK14 and activation of ATF2. The phosphorylation of MAPK14 requires upstream activity of MAP2K4 and MAP2K6. The sequence is that of Cytokine-like nuclear factor N-PAC from Homo sapiens (Human).